A 264-amino-acid chain; its full sequence is Putative hydroxypyruvate isomerase (264 aa).

Residues Glu145 and Glu243 each act as proton donor/acceptor in the active site.

The protein belongs to the hyi family.

It catalyses the reaction 3-hydroxypyruvate = 2-hydroxy-3-oxopropanoate. Catalyzes the reversible isomerization between hydroxypyruvate and 2-hydroxy-3-oxopropanoate (also termed tartronate semialdehyde). In Drosophila melanogaster (Fruit fly), this protein is Putative hydroxypyruvate isomerase (Gip).